A 231-amino-acid chain; its full sequence is Aldehyde decarbonylase (231 aa).

Residues Glu-32, Glu-60, His-63, Glu-115, and His-147 each contribute to the Fe cation site.

The protein belongs to the aldehyde decarbonylase family. The cofactor is Binds 2 metal cations per subunit. The catalytic dinuclear metal-binding site could be either a di-iron or a manganese-iron cofactor..

It catalyses the reaction a long-chain fatty aldehyde + 2 NADPH + O2 + H(+) = a long-chain alkane + formate + 2 NADP(+) + H2O. In terms of biological role, catalyzes the decarbonylation of fatty aldehydes to alkanes. Requires the presence of ferredoxin, ferredoxin reductase and NADPH for in vitro decarbonylase activity. Involved in the biosynthesis of alkanes, mainly heptadecane and pentadecane. This Synechocystis sp. (strain ATCC 27184 / PCC 6803 / Kazusa) protein is Aldehyde decarbonylase.